A 446-amino-acid polypeptide reads, in one-letter code: Ribulose bisphosphate carboxylase large chain (446 aa).

Residues asparagine 89 and threonine 139 each coordinate substrate. The Proton acceptor role is filled by lysine 141. Residue lysine 143 coordinates substrate. The Mg(2+) site is built by lysine 167, aspartate 169, and glutamate 170. Lysine 167 carries the post-translational modification N6-carboxylysine. The Proton acceptor role is filled by histidine 260. Substrate-binding residues include arginine 261, histidine 293, and serine 345.

The protein belongs to the RuBisCO large chain family. Type I subfamily. As to quaternary structure, heterohexadecamer of 8 large chains and 8 small chains; disulfide-linked. The disulfide link is formed within the large subunit homodimers. Mg(2+) is required as a cofactor. In terms of processing, the disulfide bond which can form in the large chain dimeric partners within the hexadecamer appears to be associated with oxidative stress and protein turnover.

It is found in the plastid. Its subcellular location is the chloroplast. The catalysed reaction is 2 (2R)-3-phosphoglycerate + 2 H(+) = D-ribulose 1,5-bisphosphate + CO2 + H2O. The enzyme catalyses D-ribulose 1,5-bisphosphate + O2 = 2-phosphoglycolate + (2R)-3-phosphoglycerate + 2 H(+). In terms of biological role, ruBisCO catalyzes two reactions: the carboxylation of D-ribulose 1,5-bisphosphate, the primary event in carbon dioxide fixation, as well as the oxidative fragmentation of the pentose substrate in the photorespiration process. Both reactions occur simultaneously and in competition at the same active site. This chain is Ribulose bisphosphate carboxylase large chain, found in Exacum affine (Persian violet).